We begin with the raw amino-acid sequence, 617 residues long: Membrane protein insertase YidC (617 aa).

A helical transmembrane segment spans residues 8 to 28; that stretch reads MFVAIGLSLLVLLGWQYFVAG. Over residues 36-49 the composition is skewed to polar residues; sequence QIEAQNKAAQQQPP. The tract at residues 36 to 91 is disordered; that stretch reads QIEAQNKAAQQQPPGVTPDGVPSPSPKEGGPAAPAPGTLPTAQGGPVSREAALARS. Residues 61-81 are compositionally biased toward low complexity; sequence PKEGGPAAPAPGTLPTAQGGP. 4 helical membrane-spanning segments follow: residues 387 to 407, 461 to 481, 517 to 533, and 549 to 569; these read LFGNFGVSILVVTFCLKLLFL, WPVLIQIPVFFALYKVLFITI, FVHLGVWPIIMGITMFV, and IFTFMPIVFTFMLGSFPAGLV.

Belongs to the OXA1/ALB3/YidC family. Type 1 subfamily. In terms of assembly, interacts with the Sec translocase complex via SecD. Specifically interacts with transmembrane segments of nascent integral membrane proteins during membrane integration.

The protein localises to the cell inner membrane. Functionally, required for the insertion and/or proper folding and/or complex formation of integral membrane proteins into the membrane. Involved in integration of membrane proteins that insert both dependently and independently of the Sec translocase complex, as well as at least some lipoproteins. Aids folding of multispanning membrane proteins. The protein is Membrane protein insertase YidC of Methylobacterium radiotolerans (strain ATCC 27329 / DSM 1819 / JCM 2831 / NBRC 15690 / NCIMB 10815 / 0-1).